Reading from the N-terminus, the 1165-residue chain is DNA-directed RNA polymerase subunit beta (1165 aa).

The protein belongs to the RNA polymerase beta chain family. The RNAP catalytic core consists of 2 alpha, 1 beta, 1 beta' and 1 omega subunit. When a sigma factor is associated with the core the holoenzyme is formed, which can initiate transcription.

The catalysed reaction is RNA(n) + a ribonucleoside 5'-triphosphate = RNA(n+1) + diphosphate. Functionally, DNA-dependent RNA polymerase catalyzes the transcription of DNA into RNA using the four ribonucleoside triphosphates as substrates. This is DNA-directed RNA polymerase subunit beta from Leifsonia xyli subsp. xyli (strain CTCB07).